Here is a 660-residue protein sequence, read N- to C-terminus: Neurexin-2-beta (660 aa).

Residues 1–10 show a composition bias toward gly residues; it reads MPPGGSGQGG. Residues 1-27 are disordered; it reads MPPGGSGQGGCPRRPPALAGPLPPPPP. An N-terminal signal peptide occupies residues 1–46; the sequence is MPPGGSGQGGCPRRPPALAGPLPPPPPPPPLPLLLGLLLLLGAAEG. At 47 to 584 the chain is on the extracellular side; the sequence is ARVSSSLSTT…EVIRESSSTT (538 aa). Positions 87-295 constitute a Laminin G-like domain; it reads TTYIFGKGGA…HLRLVGEGPS (209 aa). Ca(2+)-binding residues include D139 and V156. Residue N186 is glycosylated (N-linked (GlcNAc...) asparagine). Ca(2+) contacts are provided by I238 and N240. An O-linked (Xyl...) (heparan sulfate) serine glycan is attached at S350. Disordered stretches follow at residues 408-458 and 537-571; these read ATQD…LPPT and EPRR…RGPP. Residue N561 is glycosylated (N-linked (GlcNAc...) asparagine). A helical membrane pass occupies residues 585–605; that stretch reads GMVVGIVAAAALCILILLYAM. The Cytoplasmic portion of the chain corresponds to 606–660; that stretch reads YKYRNRDEGSYQVDQSRNYISNSAQSNGAVVKEKAPAAPKTPSKAKKNKDKEYYV. Residues 627 to 660 are disordered; that stretch reads NSAQSNGAVVKEKAPAAPKTPSKAKKNKDKEYYV.

It belongs to the neurexin family. In terms of assembly, interacts (via cytoplasmic C-terminal region) with CASK. Specific isoforms bind alpha-dystroglycan and neuroligins NLGN1, NLGN2 and NLGN3. Interacts with CBLN1, CBLN2 and, less avidly, with CBLN4. Interacts with CLSTN3. Post-translationally, O-glycosylated; contains heparan sulfate. Heparan sulfate attachment is required for synapse development by mediating interactions with neuroligins.

The protein resides in the presynaptic cell membrane. Neuronal cell surface protein that may be involved in cell recognition and cell adhesion. This is Neurexin-2-beta from Mus musculus (Mouse).